Consider the following 174-residue polypeptide: Adipose-secreted signaling protein (174 aa).

Alanine 2 bears the N-acetylalanine mark. At threonine 147 the chain carries Phosphothreonine.

This sequence belongs to the ADISSP family.

It localises to the secreted. Adipocyte-secreted protein (adipokine) that acts as a key regulator for white adipose tissue (WAT) thermogenesis and glucose homeostasis at least in part through activation of protein kinase A (PKA). In Bos taurus (Bovine), this protein is Adipose-secreted signaling protein.